The chain runs to 658 residues: uncharacterized protein (658 aa).

Residues 516–639 (SSNNSNSSNN…NNNNNSSQGG (124 aa)) are compositionally biased toward low complexity. Residues 516-646 (SSNNSNSSNN…QGGNSQGGSG (131 aa)) are disordered.

The protein resides in the cytoplasm. This is an uncharacterized protein from Schizosaccharomyces pombe (strain 972 / ATCC 24843) (Fission yeast).